Consider the following 447-residue polypeptide: Phosphoglucosamine mutase (447 aa).

S103 serves as the catalytic Phosphoserine intermediate. S103, D242, D244, and D246 together coordinate Mg(2+). A Phosphoserine modification is found at S103.

This sequence belongs to the phosphohexose mutase family. Mg(2+) is required as a cofactor. Activated by phosphorylation.

It carries out the reaction alpha-D-glucosamine 1-phosphate = D-glucosamine 6-phosphate. Its function is as follows. Catalyzes the conversion of glucosamine-6-phosphate to glucosamine-1-phosphate. The chain is Phosphoglucosamine mutase from Dinoroseobacter shibae (strain DSM 16493 / NCIMB 14021 / DFL 12).